The following is a 529-amino-acid chain: UDP-glucuronosyltransferase 2B1 (529 aa).

An N-terminal signal peptide occupies residues 1-23; sequence MSMKQTSVFLLIQLICYFRPGAC. 2 N-linked (GlcNAc...) asparagine glycosylation sites follow: asparagine 134 and asparagine 316. The chain crosses the membrane as a helical span at residues 494–510; the sequence is VIGFLLLCVVGVVFIIT.

Belongs to the UDP-glycosyltransferase family.

It is found in the endoplasmic reticulum membrane. The catalysed reaction is glucuronate acceptor + UDP-alpha-D-glucuronate = acceptor beta-D-glucuronoside + UDP + H(+). It catalyses the reaction 17beta-estradiol + UDP-alpha-D-glucuronate = 17beta-estradiol 17-O-(beta-D-glucuronate) + UDP + H(+). UDP-glucuronosyltransferase (UGT) that catalyzes phase II biotransformation reactions in which lipophilic substrates are conjugated with glucuronic acid to increase the metabolite's water solubility, thereby facilitating excretion into either the urine or bile. Essential for the elimination and detoxification of drugs, xenobiotics and endogenous compounds. Catalyzes the glucuronidation of the endogenous estrogen hormone estradiol. In Rattus norvegicus (Rat), this protein is UDP-glucuronosyltransferase 2B1.